Reading from the N-terminus, the 234-residue chain is MDSTLKHLAIIMDGNGRWAKLKNKARAYGHKKGVKTLKDITIWCANHKLECLTLYAFSTENWKRPKSEVDFLMKMLKKYLKDERSTYLDNNIRFRAIGDLEGFSKELRDTILRLENDTRYFKDFTQVLALNYGSKNELSRAFKSLLENPPNHINNIESLENEISHRLDTHDLPEVDLLLRTGGEMRLSNFLLWQSSYAELFFTPILWPDFTPKDLENIISDFYKRVRKFGELKC.

Asp-13 is an active-site residue. Mg(2+) is bound at residue Asp-13. Residues 14 to 17 (GNGR), Trp-18, Arg-26, His-30, and 58 to 60 (STE) contribute to the substrate site. Asn-61 acts as the Proton acceptor in catalysis. Residues Trp-62, Arg-64, Arg-180, and 186-188 (RLS) contribute to the substrate site. Mg(2+) is bound at residue Glu-199.

The protein belongs to the UPP synthase family. As to quaternary structure, homodimer. It depends on Mg(2+) as a cofactor.

Catalyzes the condensation of isopentenyl diphosphate (IPP) with allylic pyrophosphates generating different type of terpenoids. The protein is Isoprenyl transferase of Helicobacter pylori (strain J99 / ATCC 700824) (Campylobacter pylori J99).